The chain runs to 121 residues: MTAMEFLPVLFMVTGIVLVAAATLFVSSLLRPSNPYPEKNAPYECGMEAAGEAAGGRFRVPFFILAILLVVFDVEAMFLFPWAVVLKEIGFVGYIEMFVFMLLLLVGFAYAWLKGALEWQE.

The next 3 helical transmembrane spans lie at 6 to 26 (FLPVLFMVTGIVLVAAATLFV), 60 to 80 (VPFFILAILLVVFDVEAMFLF), and 89 to 109 (IGFVGYIEMFVFMLLLLVGFA).

It belongs to the complex I subunit 3 family. As to quaternary structure, NDH-1 is composed of 14 different subunits. Subunits NuoA, H, J, K, L, M, N constitute the membrane sector of the complex.

It localises to the cell inner membrane. The enzyme catalyses a quinone + NADH + 5 H(+)(in) = a quinol + NAD(+) + 4 H(+)(out). Functionally, NDH-1 shuttles electrons from NADH, via FMN and iron-sulfur (Fe-S) centers, to quinones in the respiratory chain. The immediate electron acceptor for the enzyme in this species is believed to be ubiquinone. Couples the redox reaction to proton translocation (for every two electrons transferred, four hydrogen ions are translocated across the cytoplasmic membrane), and thus conserves the redox energy in a proton gradient. This chain is NADH-quinone oxidoreductase subunit A 2, found in Rhizobium meliloti (strain 1021) (Ensifer meliloti).